The sequence spans 210 residues: Thymidylate kinase (210 aa).

Glycine 16–serine 23 serves as a coordination point for ATP.

The protein belongs to the thymidylate kinase family.

It catalyses the reaction dTMP + ATP = dTDP + ADP. Functionally, phosphorylation of dTMP to form dTDP in both de novo and salvage pathways of dTTP synthesis. The chain is Thymidylate kinase from Leifsonia xyli subsp. xyli (strain CTCB07).